The sequence spans 120 residues: MTTQEFIDAIKGMTVLELNDLVKACEEEFGVSAAAGVVVAAAGPAEAAEEKTEFDVELTDVGANKVKVIKVVREVTGLGLKEAKDVVDGAPKVLKEAASKEEADDIKAKLEAEGAKVTLK.

It belongs to the bacterial ribosomal protein bL12 family. In terms of assembly, homodimer. Part of the ribosomal stalk of the 50S ribosomal subunit. Forms a multimeric L10(L12)X complex, where L10 forms an elongated spine to which 2 to 4 L12 dimers bind in a sequential fashion. Binds GTP-bound translation factors.

Functionally, forms part of the ribosomal stalk which helps the ribosome interact with GTP-bound translation factors. Is thus essential for accurate translation. This Lachnoclostridium phytofermentans (strain ATCC 700394 / DSM 18823 / ISDg) (Clostridium phytofermentans) protein is Large ribosomal subunit protein bL12.